The sequence spans 616 residues: FAD-linked oxidoreductase cheF (616 aa).

The FAD-binding PCMH-type domain occupies N160–A344.

Belongs to the oxygen-dependent FAD-linked oxidoreductase family. Requires FAD as cofactor.

It participates in secondary metabolite biosynthesis. In terms of biological role, FAD-linked oxidoreductase; part of the gene cluster that mediates the biosynthesis of chaetoglobosin A which has a unique inhibitory activity against actin polymerization in mammalian cells. Chaetoglobosin A and its intermediates are involved in the morphological differentiation of C.globosum. The first step of the pathway is the synthesis of prochaetoglobosin I via condensation of one acetyl-CoA, 8 malonyl-CoA, and a L-tryptophan molecule by the PKS-NRPS hybrid synthetase cheA, followed by reduction of backbone double bond to install desired geometry by the enoyl reductase cheB. Further multiple oxidation steps performed by the cytochrome P450 monooxygenases cheE and cheG, as well as by the FAD-linked oxidoreductase cheF, lead to the formation of chaetoglobosin A. Depending on the order of action of these reductases, distinct intermediates can be identified. Within the pathway, the cytochrome P450 monooxygenase cheE catalyzes a stereospecific epoxidation on prochaetoglobosin I, cytoglobosin D, and chaetoglobosin J intermediates. The FAD-linked oxidoreductase cheF performs dehydrogenation of the C-20 hydroxyl groups in the 20-dihyrochaetoglobosin A and cytoglobosin D intermediates. Finally, the cytochrome P450 monooxygenase cheG can catalyze the stereospecific dihydroxylation of prochaetoglobosin I and prochaetoglobosin IV at C-19 and C-20, respectively. The Diels-Alderase cheD may play a role in the post-PKS-NRPS biosynthetic steps catalyzing Diels-Alder cyclization. This chain is FAD-linked oxidoreductase cheF, found in Chaetomium globosum (strain ATCC 6205 / CBS 148.51 / DSM 1962 / NBRC 6347 / NRRL 1970) (Soil fungus).